The sequence spans 174 residues: Xanthine-guanine phosphoribosyltransferase (174 aa).

5-phospho-alpha-D-ribose 1-diphosphate contacts are provided by residues Arg49–Gly50 and Asp108–Thr116. Asp109 contributes to the Mg(2+) binding site. Positions 112 and 155 each coordinate guanine. Xanthine is bound by residues Asp112 and Ile155. Residues Asp112–Thr116 and Trp154–Ile155 each bind GMP.

The protein belongs to the purine/pyrimidine phosphoribosyltransferase family. XGPT subfamily. Homotetramer. Mg(2+) serves as cofactor.

It localises to the cell inner membrane. The catalysed reaction is GMP + diphosphate = guanine + 5-phospho-alpha-D-ribose 1-diphosphate. It catalyses the reaction XMP + diphosphate = xanthine + 5-phospho-alpha-D-ribose 1-diphosphate. It carries out the reaction IMP + diphosphate = hypoxanthine + 5-phospho-alpha-D-ribose 1-diphosphate. The protein operates within purine metabolism; GMP biosynthesis via salvage pathway; GMP from guanine: step 1/1. It participates in purine metabolism; XMP biosynthesis via salvage pathway; XMP from xanthine: step 1/1. Its function is as follows. Purine salvage pathway enzyme that catalyzes the transfer of the ribosyl-5-phosphate group from 5-phospho-alpha-D-ribose 1-diphosphate (PRPP) to the N9 position of the 6-oxopurines guanine and xanthine to form the corresponding ribonucleotides GMP (guanosine 5'-monophosphate) and XMP (xanthosine 5'-monophosphate), with the release of PPi. To a lesser extent, also acts on hypoxanthine. In Rhodopseudomonas palustris (strain BisB18), this protein is Xanthine-guanine phosphoribosyltransferase.